We begin with the raw amino-acid sequence, 471 residues long: Phosphatidylserine synthase 2 (471 aa).

The segment at 1–26 is disordered; it reads MRRGERRVAGGSGSESPLLEGRRSTE. The Cytoplasmic segment spans residues 1-40; the sequence is MRRGERRVAGGSGSESPLLEGRRSTESEVYDDGTNTFFWR. Serine 12, serine 14, and serine 16 each carry phosphoserine. The helical transmembrane segment at 41–61 threads the bilayer; the sequence is AHTLTVLFILTCALGYVTLLE. Over 62 to 74 the chain is Lumenal; the sequence is ETPQDTAYNTKRG. The helical transmembrane segment at 75 to 95 threads the bilayer; it reads IVASILVFLCFGVTQAKDGPF. Residues 96 to 104 lie on the Cytoplasmic side of the membrane; that stretch reads SRPHPAYWR. The chain crosses the membrane as a helical span at residues 105–125; it reads FWLCVSVVYELFLIFILFQTV. The Lumenal portion of the chain corresponds to 126-291; the sequence is HDGRQFLKYV…EWKPASSLHR (166 aa). Asparagine 159 is a glycosylation site (N-linked (GlcNAc...) asparagine). The helical transmembrane segment at 292 to 312 threads the bilayer; that stretch reads WLAVCGIILVFLLAELNTFYL. Position 313 (lysine 313) is a topological domain, cytoplasmic. Residues 314-334 traverse the membrane as a helical segment; that stretch reads FVLWMPPEHYLVLLRLVFFVN. Residues 335–354 lie on the Lumenal side of the membrane; it reads VGGVAMREIYDFMDELKPHR. The helical transmembrane segment at 355–375 threads the bilayer; sequence KLGQQAWLVAAITVTELLIVV. At 376 to 381 the chain is on the cytoplasmic side; that stretch reads KYDPHT. Residues 382 to 402 traverse the membrane as a helical segment; the sequence is LTLSLPFYISQCWTLGSILVL. The Lumenal segment spans residues 403–471; that stretch reads TWTVWRFFLR…PAEEGPSAAS (69 aa). The interval 423 to 471 is disordered; sequence RQKQQSHQAINNGDGHPGPEDDLPGTGTAEEEGTTNDGVPAEEGPSAAS.

The protein belongs to the phosphatidyl serine synthase family.

It is found in the endoplasmic reticulum membrane. The enzyme catalyses a 1,2-diacyl-sn-glycero-3-phosphoethanolamine + L-serine = a 1,2-diacyl-sn-glycero-3-phospho-L-serine + ethanolamine. It carries out the reaction 1-hexadecanoyl-2-(9Z-octadecenoyl)-sn-glycero-3-phosphoethanolamine + L-serine = 1-hexadecanoyl-2-(9Z-octadecenoyl)-sn-glycero-3-phospho-L-serine + ethanolamine. The catalysed reaction is 1-hexadecanoyl-2-(4Z,7Z,10Z,13Z,16Z,19Z-docosahexaenoyl)-sn-glycero-3-phosphoethanolamine + L-serine = 1-hexadecanoyl-2-(4Z,7Z,10Z,13Z,16Z,19Z-docosahexaenoyl)-sn-glycero-3-phosphoserine + ethanolamine. It catalyses the reaction 1-octadecanoyl-2-(5Z,8Z,11Z,14Z)-eicosatetraenoyl-sn-glycero-3-phosphoethanolamine + L-serine = 1-octadecanoyl-2-(5Z,8Z,11Z,14Z)-eicosatetraenoyl-sn-glycero-3-phosphoserine + ethanolamine. The enzyme catalyses 1-octadecanoyl-2-(4Z,7Z,10Z,13Z,16Z,19Z-docosahexaenoyl)-sn-glycero-3-phosphoethanolamine + L-serine = 1-octadecanoyl-2-(4Z,7Z,10Z,13Z,16Z,19Z-docosahexaenoyl)-sn-glycero-3-phosphoserine + ethanolamine. It carries out the reaction 1-(1Z-octadecenyl)-2-(4Z,7Z,10Z,13Z,16Z,19Z-docosahexaenoyl)-sn-glycero-3-phosphoethanolamine + L-serine = 1-(1Z-octadecenyl)-2-(4Z,7Z,10Z,13Z,16Z,19Z-docosahexaenoyl)-sn-glycero-3-phospho-L-serine + ethanolamine. The catalysed reaction is 1-octadecanoyl-2-(9Z-octadecenoyl)-sn-glycero-3-phosphoethanolamine + L-serine = 1-octadecanoyl-2-(9Z-octadecenoyl)-sn-glycero-3-phospho-L-serine + ethanolamine. It catalyses the reaction 1-(1Z-octadecenyl)-2-(9Z-octadecenoyl)-sn-glycero-3-phosphoethanolamine + L-serine = 1-(1Z-octadecenyl)-2-(9Z-octadecenoyl)-sn-glycero-3-phospho-L-serine + ethanolamine. The enzyme catalyses 1-(1Z-octadecenyl)-2-(5Z,8Z,11Z,14Z- eicosatetraenoyl)-sn-glycero-3-phosphoethanolamine + L-serine = 1-(1Z-octadecenyl)-2-(5Z,8Z,11Z,14Z-eicosatetraenoyl)-sn-glycero-3-phospho-L-serine + ethanolamine. Its pathway is phospholipid metabolism; phosphatidylserine biosynthesis. Catalyzes a base-exchange reaction in which the polar head group of phosphatidylethanolamine (PE) or phosphatidylcholine (PC) is replaced by L-serine. Catalyzes the conversion of phosphatatidylethanolamine and does not act on phosphatidylcholine. Can utilize both phosphatidylethanolamine (PE) plasmalogen and diacyl PE as substrate and the latter is six times better utilized, indicating the importance of an ester linkage at the sn-1 position. Although it shows no sn-1 fatty acyl preference, exhibits significant preference towards docosahexaenoic acid (22:6n-3) compared with 18:1 or 20:4 at the sn-2 position. The polypeptide is Phosphatidylserine synthase 2 (Ptdss2) (Rattus norvegicus (Rat)).